The following is a 297-amino-acid chain: Protoheme IX farnesyltransferase (297 aa).

Helical transmembrane passes span 26 to 46, 48 to 68, 96 to 116, 120 to 140, 147 to 167, 174 to 194, 218 to 238, 245 to 265, and 276 to 296; these read VTQLAVFCAVIGMFLATPGMV, YPVLFGGIVGIWLLAGAAFAV, LHIIIFSIILGSLGMIILWNF, LTMWLTLATFVGYAVIYTWLL, NIVIGGLSGAMPPALGWAAVT, AWHLVLIIFVWTPPHFWALAL, LLNIVLYTLILIAATMLPYIY, YLISAIILGLLFLAYVVALFI, and FRFSITYLSLLFAALLVDHYF.

Belongs to the UbiA prenyltransferase family. Protoheme IX farnesyltransferase subfamily.

It localises to the cell inner membrane. It carries out the reaction heme b + (2E,6E)-farnesyl diphosphate + H2O = Fe(II)-heme o + diphosphate. It functions in the pathway porphyrin-containing compound metabolism; heme O biosynthesis; heme O from protoheme: step 1/1. Its function is as follows. Converts heme B (protoheme IX) to heme O by substitution of the vinyl group on carbon 2 of heme B porphyrin ring with a hydroxyethyl farnesyl side group. The sequence is that of Protoheme IX farnesyltransferase from Polynucleobacter necessarius subsp. necessarius (strain STIR1).